We begin with the raw amino-acid sequence, 578 residues long: Probable cytochrome c oxidase subunit 1-alpha (578 aa).

The disordered stretch occupies residues 1-21 (MSILNEPQGASAAEDSYENEL). A helical transmembrane segment spans residues 44 to 64 (IGTMYLVTSFAFFVIGGVMAL). His-90 contributes to the Fe(II)-heme a binding site. 6 consecutive transmembrane segments (helical) span residues 93–113 (IMLL…IMPL), 125–145 (LNMF…GGFL), 174–194 (LWIM…VNFI), 217–237 (VLLT…ALFA), 262–282 (LFWF…FGIV), and 294–314 (IFGY…SVTV). Residues His-268 and Tyr-272 each coordinate Cu cation. A cross-link (1'-histidyl-3'-tyrosine (His-Tyr)) is located at residues 268–272 (HPEVY). Positions 317 and 318 each coordinate Cu cation. Helical transmembrane passes span 319–339 (MYVT…LIAV) and 363–383 (MLWS…GVIL). His-401 contributes to the heme a3 binding site. 3 helical membrane passes run 402–422 (FHYV…HFWW), 437–457 (ITFW…HWLG), and 480–500 (ISTI…YNIW). Residue His-403 coordinates Fe(II)-heme a.

This sequence belongs to the heme-copper respiratory oxidase family. As to quaternary structure, associates with subunits II, III and IV to form cytochrome c oxidase. Requires Cu(2+) as cofactor. Heme is required as a cofactor.

Its subcellular location is the cell membrane. The enzyme catalyses 4 Fe(II)-[cytochrome c] + O2 + 8 H(+)(in) = 4 Fe(III)-[cytochrome c] + 2 H2O + 4 H(+)(out). It participates in energy metabolism; oxidative phosphorylation. Functionally, cytochrome c oxidase is the component of the respiratory chain that catalyzes the reduction of oxygen to water. Subunits 1-3 form the functional core of the enzyme complex. CO I is the catalytic subunit of the enzyme. Electrons originating in cytochrome c are transferred via the copper A center of subunit 2 and heme A of subunit 1 to the bimetallic center formed by heme A3 and copper B. This chain is Probable cytochrome c oxidase subunit 1-alpha (ctaD1), found in Streptomyces coelicolor (strain ATCC BAA-471 / A3(2) / M145).